A 285-amino-acid polypeptide reads, in one-letter code: Ribosomal RNA large subunit methyltransferase F (285 aa).

This sequence belongs to the methyltransferase superfamily. METTL16/RlmF family.

The protein resides in the cytoplasm. It carries out the reaction adenosine(1618) in 23S rRNA + S-adenosyl-L-methionine = N(6)-methyladenosine(1618) in 23S rRNA + S-adenosyl-L-homocysteine + H(+). In terms of biological role, specifically methylates the adenine in position 1618 of 23S rRNA. This is Ribosomal RNA large subunit methyltransferase F from Christiangramia forsetii (strain DSM 17595 / CGMCC 1.15422 / KT0803) (Gramella forsetii).